A 746-amino-acid chain; its full sequence is Polyribonucleotide nucleotidyltransferase (746 aa).

Positions 490 and 496 each coordinate Mg(2+). The KH domain occupies 557–619 (PRIETMIIGK…ATIDAAVKAI (63 aa)). Residues 629–699 (GEVYEGKISS…KTGKFKLSRK (71 aa)) form the S1 motif domain. The segment at 701–746 (LLPKPEGYEERPPRPERGERGPRQDRGDRGPRQDRGDRGPRREYRD) is disordered. Residues 706 to 746 (EGYEERPPRPERGERGPRQDRGDRGPRQDRGDRGPRREYRD) show a composition bias toward basic and acidic residues.

The protein belongs to the polyribonucleotide nucleotidyltransferase family. The cofactor is Mg(2+).

It is found in the cytoplasm. The enzyme catalyses RNA(n+1) + phosphate = RNA(n) + a ribonucleoside 5'-diphosphate. In terms of biological role, involved in mRNA degradation. Catalyzes the phosphorolysis of single-stranded polyribonucleotides processively in the 3'- to 5'-direction. The sequence is that of Polyribonucleotide nucleotidyltransferase from Parabacteroides distasonis (strain ATCC 8503 / DSM 20701 / CIP 104284 / JCM 5825 / NCTC 11152).